Reading from the N-terminus, the 40-residue chain is Unknown protein from spot 207 of 2D-PAGE of etiolated coleoptile (40 aa).

The protein belongs to the GST superfamily. HSP26 family.

The polypeptide is Unknown protein from spot 207 of 2D-PAGE of etiolated coleoptile (Zea mays (Maize)).